Consider the following 390-residue polypeptide: Odorant receptor 85b (390 aa).

The Cytoplasmic portion of the chain corresponds to 1–30; it reads MEKLMKYASFFYTAVGIRPYTNGEESKMNK. Residues 31-51 traverse the membrane as a helical segment; the sequence is LIFHIVFWSNVINLSFVGLFE. The Extracellular segment spans residues 52-66; it reads SIYVYSAFMDNKFLE. Residues 67 to 87 traverse the membrane as a helical segment; it reads AVTALSYIGFVTVGMSKMFFI. Residues 88–126 are Cytoplasmic-facing; sequence RWKKTAITELINELKEIYPNGLIREERYNLPMYLGTCSR. Residues 127–147 traverse the membrane as a helical segment; that stretch reads ISLIYSLLYSVLIWTFNLFCV. Residues 148–200 lie on the Extracellular side of the membrane; the sequence is MEYWVYDKWLNIRVVGKQLPYLMYIPWKWQDNWSYYPLLFSQNFAGYTSAAGQ. Asn179 is a glycosylation site (N-linked (GlcNAc...) asparagine). A helical membrane pass occupies residues 201 to 221; that stretch reads ISTDVLLCAVATQLVMHFDFL. Over 222–260 the chain is Cytoplasmic; that stretch reads SNSMERHELSGDWKKDSRFLVDIVRYHERILRLSDAVND. The helical transmembrane segment at 261-281 threads the bilayer; sequence IFGIPLLLNFMVSSFVICFVG. Topologically, residues 282–291 are extracellular; that stretch reads FQMTVGVPPD. The helical transmembrane segment at 292–312 threads the bilayer; that stretch reads IVVKLFLFLVSSMSQVYLICH. At 313-360 the chain is on the cytoplasmic side; sequence YGQLVADASYGFSVATYNQKWYKADVRYKRALVIIIARSQKVTFLKAT. Residues 361–381 traverse the membrane as a helical segment; sequence IFLDITRSTMTDLLQISYKFF. The Extracellular segment spans residues 382–390; sequence ALLRTMYTQ.

This sequence belongs to the insect chemoreceptor superfamily. Heteromeric odorant receptor channel (TC 1.A.69) family. Or49a subfamily. In terms of assembly, interacts with Orco. Complexes exist early in the endomembrane system in olfactory sensory neurons (OSNs), coupling these complexes to the conserved ciliary trafficking pathway. As to expression, expressed in olfactory sensory neurons in the antenna.

It is found in the cell membrane. Functionally, odorant receptor which mediates acceptance or avoidance behavior, depending on its substrates. The odorant receptor repertoire encodes a large collection of odor stimuli that vary widely in identity, intensity, and duration. Forms a complex with Orco to form odorant-sensing units, providing sensitive and prolonged odorant signaling and calcium permeability. Involved in the behavioral responses to 2-heptanone, amyl acetate, and butyl acetate. The sequence is that of Odorant receptor 85b (Or85b) from Drosophila melanogaster (Fruit fly).